Consider the following 347-residue polypeptide: tRNA N6-adenosine threonylcarbamoyltransferase (347 aa).

The Fe cation site is built by H115 and H119. Substrate is bound by residues 138-142, D171, G184, and N277; that span reads LVSGG. Residue D305 coordinates Fe cation.

This sequence belongs to the KAE1 / TsaD family. The cofactor is Fe(2+).

The protein localises to the cytoplasm. It carries out the reaction L-threonylcarbamoyladenylate + adenosine(37) in tRNA = N(6)-L-threonylcarbamoyladenosine(37) in tRNA + AMP + H(+). Functionally, required for the formation of a threonylcarbamoyl group on adenosine at position 37 (t(6)A37) in tRNAs that read codons beginning with adenine. Is involved in the transfer of the threonylcarbamoyl moiety of threonylcarbamoyl-AMP (TC-AMP) to the N6 group of A37, together with TsaE and TsaB. TsaD likely plays a direct catalytic role in this reaction. This is tRNA N6-adenosine threonylcarbamoyltransferase from Polaromonas sp. (strain JS666 / ATCC BAA-500).